A 342-amino-acid polypeptide reads, in one-letter code: Antihemorrhagic factor HSF (342 aa).

The N-terminal stretch at methionine 1 to serine 19 is a signal peptide. Cystatin fetuin-A-type domains follow at residues valine 22 to histidine 130 and arginine 141 to valine 254. The short motif at arginine 23 to aspartate 25 is the Cell attachment site element. An indispensable for metalloproteinase inhibition region spans residues glycine 24 to methionine 108. Cystine bridges form between cysteine 28–cysteine 332, cysteine 85–cysteine 96, cysteine 110–cysteine 129, cysteine 143–cysteine 146, cysteine 205–cysteine 217, and cysteine 230–cysteine 253. Asparagine 142 carries N-linked (GlcNAc...) asparagine glycosylation. The N-linked (GlcNAc...) asparagine glycan is linked to asparagine 204. N-linked (GlcNAc...) asparagine glycosylation is present at asparagine 282.

It belongs to the fetuin family. Post-translationally, cys-63 may exist in a mixed disulfide form with a thiol compound such as glutathione. In terms of tissue distribution, expressed by the liver.

It is found in the secreted. Inhibits hemorrhagic and proteolytic activities of metalloproteinases (HR1A, HR1B, HR2a, HR2b and H2 proteinase from T.flavodidis and brevilysins H3, H4, H6 and L4 from A.halys brevicaudus). Has no effect on brevilysins H2. Has no effect on papain and cathepsin-B. This chain is Antihemorrhagic factor HSF, found in Protobothrops flavoviridis (Habu).